A 197-amino-acid polypeptide reads, in one-letter code: Heart- and neural crest derivatives-expressed protein 1 (197 aa).

2 disordered regions span residues 61-94 (VVGP…RRTE) and 155-184 (VDGK…KGRT). The span at 78–90 (LGRRKGAPPKKER) shows a compositional bias: basic residues. The bHLH domain occupies 80–132 (RRKGAPPKKERRRTESINSAFAELRECIPNVPADTKLSKIKTLRLATSYIGYL).

As to quaternary structure, efficient DNA binding requires dimerization with another bHLH protein. Highly expressed in the adult heart and expressed at lower levels in the intestine and gall bladder.

The protein localises to the nucleus. The protein resides in the nucleolus. Plays an essential role in cardiac morphogenesis. This Xenopus laevis (African clawed frog) protein is Heart- and neural crest derivatives-expressed protein 1 (hand1).